We begin with the raw amino-acid sequence, 24 residues long: Humanin-like 3 (24 aa).

This sequence belongs to the humanin family. Highly expressed in testis. Also expressed in kidney, heart, skeletal muscles and brain.

It is found in the secreted. The protein localises to the cytoplasm. Functionally, plays a role as a neuroprotective and antiapoptotic factor. The sequence is that of Humanin-like 3 from Homo sapiens (Human).